The following is a 310-amino-acid chain: Olfactory receptor 5W2 (310 aa).

Topologically, residues 1–25 (MDWENCSSLTDFFLLGITNNPEMKV) are extracellular. N5 is a glycosylation site (N-linked (GlcNAc...) asparagine). The helical transmembrane segment at 26–46 (TLFAVFLAVYIINFSANLGMI) threads the bilayer. Residues 47–54 (VLIRMDYQ) are Cytoplasmic-facing. The chain crosses the membrane as a helical span at residues 55–75 (LHTPMYFFLSHLSFCDLCYST). At 76 to 99 (ATGPKMLVDLLAKNKSIPFYGCAL) the chain is on the extracellular side. Residues 100–120 (QFLVFCIFADSECLLLSVMAF) form a helical membrane-spanning segment. The Cytoplasmic segment spans residues 121 to 139 (DRYKAIINPLLYTVNMSSR). Residues 140–160 (VCYLLLTGVYLVGIADALIHM) form a helical membrane-spanning segment. Residues 161-196 (TLAFRLCFCGSNEINHFFCDIPPLLLLSRSDTQVNE) are Extracellular-facing. The helical transmembrane segment at 197–217 (LVLFTVFGFIELSTISGVFIS) threads the bilayer. At 218–237 (YCYIILSVLEIHSAEGRFKA) the chain is on the cytoplasmic side. The chain crosses the membrane as a helical span at residues 238-258 (LSTCTSHLSAVAIFQGTLLFM). At 259–271 (YFRPSSSYSLDQD) the chain is on the extracellular side. A helical membrane pass occupies residues 272–292 (KMTSLFYTLVVPMLNPLIYSL). The Cytoplasmic portion of the chain corresponds to 293–310 (RNKDVKEALKKLKNKILF).

The protein belongs to the G-protein coupled receptor 1 family.

The protein resides in the cell membrane. Functionally, odorant receptor. This is Olfactory receptor 5W2 (OR5W2) from Homo sapiens (Human).